The sequence spans 222 residues: Endonuclease V (222 aa).

Mg(2+) is bound by residues Asp43 and Asp109.

This sequence belongs to the endonuclease V family. Mg(2+) is required as a cofactor.

Its subcellular location is the cytoplasm. It catalyses the reaction Endonucleolytic cleavage at apurinic or apyrimidinic sites to products with a 5'-phosphate.. In terms of biological role, DNA repair enzyme involved in the repair of deaminated bases. Selectively cleaves double-stranded DNA at the second phosphodiester bond 3' to a deoxyinosine leaving behind the intact lesion on the nicked DNA. The chain is Endonuclease V from Roseiflexus castenholzii (strain DSM 13941 / HLO8).